We begin with the raw amino-acid sequence, 557 residues long: Potassium-transporting ATPase potassium-binding subunit (557 aa).

Transmembrane regions (helical) follow at residues 5–25 (GFLL…PLGS), 63–83 (LCAI…MLLG), 132–152 (GLTV…FAFI), 170–190 (LLRI…LFFI), 253–273 (FVQM…FGEV), 283–303 (LLWA…WAEV), 329–349 (VLVS…AVIA), 356–376 (ALGG…FGGV), 379–399 (GLYG…LMIG), 416–436 (LTAL…ALAM), 484–504 (LLAF…MAIA), and 526–546 (LFVG…FIPA).

The protein belongs to the KdpA family. As to quaternary structure, the system is composed of three essential subunits: KdpA, KdpB and KdpC.

It is found in the cell inner membrane. Part of the high-affinity ATP-driven potassium transport (or Kdp) system, which catalyzes the hydrolysis of ATP coupled with the electrogenic transport of potassium into the cytoplasm. This subunit binds the periplasmic potassium ions and delivers the ions to the membrane domain of KdpB through an intramembrane tunnel. The protein is Potassium-transporting ATPase potassium-binding subunit of Shigella boydii serotype 4 (strain Sb227).